We begin with the raw amino-acid sequence, 323 residues long: Lipoyl synthase (323 aa).

A disordered region spans residues 1–27 (MVTILDRTSSDEKRIRHPEKAHRPDTE). Cys-61, Cys-66, Cys-72, Cys-87, Cys-91, Cys-94, and Ser-300 together coordinate [4Fe-4S] cluster. A Radical SAM core domain is found at 73–289 (WEKKHATFMI…ETVAYAKGFL (217 aa)).

This sequence belongs to the radical SAM superfamily. Lipoyl synthase family. [4Fe-4S] cluster serves as cofactor.

The protein localises to the cytoplasm. It carries out the reaction [[Fe-S] cluster scaffold protein carrying a second [4Fe-4S](2+) cluster] + N(6)-octanoyl-L-lysyl-[protein] + 2 oxidized [2Fe-2S]-[ferredoxin] + 2 S-adenosyl-L-methionine + 4 H(+) = [[Fe-S] cluster scaffold protein] + N(6)-[(R)-dihydrolipoyl]-L-lysyl-[protein] + 4 Fe(3+) + 2 hydrogen sulfide + 2 5'-deoxyadenosine + 2 L-methionine + 2 reduced [2Fe-2S]-[ferredoxin]. The protein operates within protein modification; protein lipoylation via endogenous pathway; protein N(6)-(lipoyl)lysine from octanoyl-[acyl-carrier-protein]: step 2/2. Catalyzes the radical-mediated insertion of two sulfur atoms into the C-6 and C-8 positions of the octanoyl moiety bound to the lipoyl domains of lipoate-dependent enzymes, thereby converting the octanoylated domains into lipoylated derivatives. This Agrobacterium fabrum (strain C58 / ATCC 33970) (Agrobacterium tumefaciens (strain C58)) protein is Lipoyl synthase.